The primary structure comprises 382 residues: V-type proton ATPase subunit C 1 (382 aa).

Thr-2 carries the post-translational modification N-acetylthreonine.

It belongs to the V-ATPase C subunit family. V-ATPase is a heteromultimeric enzyme made up of two complexes: the ATP-hydrolytic V1 complex and the proton translocation V0 complex. The V1 complex consists of three catalytic AB heterodimers that form a heterohexamer, three peripheral stalks each consisting of EG heterodimers, one central rotor including subunits D and F, and the regulatory subunits C and H. The proton translocation complex V0 consists of the proton transport subunit a, a ring of proteolipid subunits c9c'', rotary subunit d, subunits e and f, and the accessory subunits ATP6AP1/Ac45 and ATP6AP2/PRR. As to expression, expressed in brain (at protein level).

It localises to the cytoplasmic vesicle. The protein localises to the secretory vesicle. Its subcellular location is the synaptic vesicle membrane. It is found in the clathrin-coated vesicle membrane. Functionally, subunit of the V1 complex of vacuolar(H+)-ATPase (V-ATPase), a multisubunit enzyme composed of a peripheral complex (V1) that hydrolyzes ATP and a membrane integral complex (V0) that translocates protons. V-ATPase is responsible for acidifying and maintaining the pH of intracellular compartments and in some cell types, is targeted to the plasma membrane, where it is responsible for acidifying the extracellular environment. Subunit C is necessary for the assembly of the catalytic sector of the enzyme and is likely to have a specific function in its catalytic activity. This is V-type proton ATPase subunit C 1 (ATP6V1C1) from Bos taurus (Bovine).